Here is a 93-residue protein sequence, read N- to C-terminus: Cell division protein CrgA (93 aa).

A run of 2 helical transmembrane segments spans residues 31–51 (VWFV…LMVF) and 70–90 (LGPW…LLTM).

This sequence belongs to the CrgA family.

It localises to the cell membrane. Involved in cell division. This Mycobacterium marinum (strain ATCC BAA-535 / M) protein is Cell division protein CrgA.